A 429-amino-acid chain; its full sequence is MPIIEQVGAREILDSRGNPTVEVEVGLLDGTVARAAVPSGASTGEHEAVELRDGGSRYLGKGVEKAVEAVLDEIAPAVIGLGADEQRLVDQALLDLDGTPDKSRLGANAILGVSLAVAKAAAQSAELPLFRYLGGPNAHILPVPMMNIINGGAHADTGVDVQEFMIAPIGAPSFKEALRWGAEVYHSLKSVLKKQGLSTGLGDEGGFAPDLPGTKAALDLIGTAIEGAGLKIGSDVALALDVAATEFYTDGTGYAFEKETRTAEQMAQFYEQLIGAYPLVSIEDPLSEDDWDGWVALTSAIGDRVQLVGDDLFVTNPERLEDGIERGAGNALLVKVNQIGTLTETLDAVSLAHHAGYKTMMSHRSGETEDTTIADLAVAVGSGQIKTGAPARSERVAKYNQLLRIEEELGDAARYAGDLAFPRFGVESK.

Q162 contacts (2R)-2-phosphoglycerate. The Proton donor role is filled by E204. Mg(2+) contacts are provided by D241, E283, and D310. The (2R)-2-phosphoglycerate site is built by K335, R364, S365, and K386. The active-site Proton acceptor is the K335.

Belongs to the enolase family. Mg(2+) is required as a cofactor.

It localises to the cytoplasm. Its subcellular location is the secreted. The protein resides in the cell surface. The catalysed reaction is (2R)-2-phosphoglycerate = phosphoenolpyruvate + H2O. It participates in carbohydrate degradation; glycolysis; pyruvate from D-glyceraldehyde 3-phosphate: step 4/5. Its function is as follows. Catalyzes the reversible conversion of 2-phosphoglycerate (2-PG) into phosphoenolpyruvate (PEP). It is essential for the degradation of carbohydrates via glycolysis. The sequence is that of Enolase from Mycolicibacterium gilvum (strain PYR-GCK) (Mycobacterium gilvum (strain PYR-GCK)).